The sequence spans 227 residues: UPF0758 protein lpl2409 (227 aa).

One can recognise an MPN domain in the interval 102–225 (RLSNTQQTYA…YSIFAENKWA (124 aa)). Zn(2+) contacts are provided by His-173, His-175, and Asp-186. A JAMM motif motif is present at residues 173–186 (HNHPSGLSDASQQD).

This sequence belongs to the UPF0758 family.

This is UPF0758 protein lpl2409 from Legionella pneumophila (strain Lens).